The following is a 172-amino-acid chain: Adenine phosphoribosyltransferase (172 aa).

It belongs to the purine/pyrimidine phosphoribosyltransferase family. In terms of assembly, homodimer.

The protein resides in the cytoplasm. It carries out the reaction AMP + diphosphate = 5-phospho-alpha-D-ribose 1-diphosphate + adenine. It functions in the pathway purine metabolism; AMP biosynthesis via salvage pathway; AMP from adenine: step 1/1. In terms of biological role, catalyzes a salvage reaction resulting in the formation of AMP, that is energically less costly than de novo synthesis. The chain is Adenine phosphoribosyltransferase from Malacoplasma penetrans (strain HF-2) (Mycoplasma penetrans).